A 138-amino-acid chain; its full sequence is Transcription factor Atoh7-b (138 aa).

The 53-residue stretch at 33–85 (KRRLAANARERRRMQGLNTAFDSLRKVVPQWGEDKKLSKYETLQMALSYIMAL) folds into the bHLH domain.

The protein localises to the nucleus. The protein resides in the perikaryon. It localises to the cell projection. It is found in the axon. Transcription factor that binds to DNA at the consensus sequence 5'-CAG[GC]TG-3'. Positively regulates the determination of retinal ganglion cell fate and formation of the optic nerve and retino-hypothalamic tract. Required for retinal circadian rhythm photoentrainment. Plays a role in brainstem auditory signaling and binaural processing. Regulates the differentiation of olfactory receptor neurons. During retinal neurogenesis, activates the transcription of several genes such as brn3d, coe3, cbfa2t2, glis2, elrC and xgadd45-gamma. In Xenopus laevis (African clawed frog), this protein is Transcription factor Atoh7-b.